The following is a 678-amino-acid chain: Transcriptional regulator CRZ1 (678 aa).

Residues M1 to S21 show a composition bias toward polar residues. 2 disordered regions span residues M1–F50 and T159–D195. Positions Y34–S47 are enriched in low complexity. The span at R166–D195 shows a compositional bias: polar residues. T170 is modified (phosphothreonine). Residues S175, S245, and S385 each carry the phosphoserine modification. A disordered region spans residues K401–N486. Low complexity predominate over residues S410–I428. Composition is skewed to basic and acidic residues over residues S429–E446 and D457–S467. The span at N472–N486 shows a compositional bias: low complexity. 2 consecutive C2H2-type zinc fingers follow at residues F569 to H591 and F597 to H619.

In terms of processing, phosphorylated. Dephosphorylated by calcineurin which leads to rapid translocation from the cytoplasm to the nucleus. Phosphorylated by the cyclin-CDK PHO80-PHO85.

The protein resides in the nucleus. The protein localises to the cytoplasm. Involved in the regulation of calcium ion homeostasis. Binds to the calcineurin-dependent response element. Transcriptionally regulates PMC1, PMR1, PMR2A and FKS2. The sequence is that of Transcriptional regulator CRZ1 (CRZ1) from Saccharomyces cerevisiae (strain ATCC 204508 / S288c) (Baker's yeast).